Reading from the N-terminus, the 2035-residue chain is Host cell factor 1 (2035 aa).

Ala-2 is modified (N-acetylalanine). Ser-6 is subject to Phosphoserine. Kelch repeat units lie at residues 44–89 (LIVV…GFVC), 93–140 (RLLV…RLGH), 148–194 (KCYL…ITYG), 217–265 (KLVI…TIGN), and 266–313 (KMYV…LMDT). Residues Lys-105, Lys-163, and Lys-244 each participate in a glycyl lysine isopeptide (Lys-Gly) (interchain with G-Cter in ubiquitin) cross-link. Residue Lys-282 forms a Glycyl lysine isopeptide (Lys-Gly) (interchain with G-Cter in SUMO2) linkage. Lys-288 carries the post-translational modification N6-acetyllysine. A Glycyl lysine isopeptide (Lys-Gly) (interchain with G-Cter in ubiquitin) cross-link involves residue Lys-363. One can recognise a Fibronectin type-III 1 domain in the interval 366–466 (PPARVQLVRA…TTTTIQVLPT (101 aa)). A disordered region spans residues 407–434 (ATATSPTPNPVPSVPANPPKSPAPAAAA). At Ser-411 the chain carries Phosphoserine. Residues 413 to 428 (TPNPVPSVPANPPKSP) are compositionally biased toward pro residues. The segment at 500 to 550 (LVTMRPASQAGKAPVTVTSLPAGVRMVVPTQSAQGTVIGSSPQMSGMAALA) is required for interaction with OGT. 2 positions are modified to omega-N-methylarginine: Arg-504 and Arg-524. Ser-598, Ser-666, and Ser-669 each carry phosphoserine. The segment at 610-722 (LKTAAAQVGT…KGPLPAGTIL (113 aa)) is interaction with SIN3A. The interval 750 to 902 (ILGISSVSPS…SLAGAGGHST (153 aa)) is interaction with ZBTB17. Lys-813 carries the N6-acetyllysine modification. Residues 813 to 912 (KIITAVPKIA…SASLATPITT (100 aa)) form an interaction with GABP2 region. 3 HCF repeat repeats span residues 1010–1035 (TLVCSNPPCETHETGTTNTATTTVVA), 1072–1097 (VRVCSNPPCETHETGTTNTATTATSN), and 1101–1126 (QHGCSNPPCETHETGTTNTATTAMSS). The stretch at 1158-1183 (AAQGSKSQCQTRQTSATSTTMTVMAT) is one HCF repeat 4; degenerate repeat. Position 1205 is a phosphoserine (Ser-1205). Arg-1219 carries the omega-N-methylarginine modification. Position 1224 is a phosphoserine (Ser-1224). HCF repeat repeat units lie at residues 1286–1311 (TQVCSNPPCETHETGTTNTATTSNAG) and 1314–1339 (QRVCSNPPCETHETGTTHTATTATSN). Disordered stretches follow at residues 1292–1371 (PPCE…TMSV), 1435–1470 (TVTSNMSSNQDPPPAASDQGEVESTQGDSVNITSSS), and 1487–1515 (VTQSTPVPGPSVPPPEELQVSPGPRQQLP). 3 stretches are compositionally biased toward low complexity: residues 1299–1312 (TGTTNTATTSNAGS), 1329–1339 (TTHTATTATSN), and 1362–1371 (TTSTGTTMSV). Residues 1349 to 1374 (QQPPAGRPCETHQTTSTGTTMSVSVG) form an HCF repeat 7; degenerate repeat. The HCF repeat 8 repeat unit spans residues 1414 to 1439 (QRVCSNPPCETHETGTTHTATTVTSN). At Thr-1491 the chain carries Phosphothreonine. The span at 1493–1502 (VPGPSVPPPE) shows a compositional bias: pro residues. A phosphoserine mark is found at Ser-1497, Ser-1507, and Ser-1771. 2 consecutive Fibronectin type-III domains span residues 1797–1888 (LPPP…TCLP) and 1890–2006 (FPGA…TSKD). Glycyl lysine isopeptide (Lys-Gly) (interchain with G-Cter in ubiquitin) cross-links involve residues Lys-1807 and Lys-1808. Phosphoserine is present on Ser-1838. Residues 1994 to 2035 (ATQVRWLQETSKDSSGTKPANKRPMSSPEMKSAPKKSKADGQ) form a disordered region. Lys-2005 is subject to N6-acetyllysine. Lys-2024 is covalently cross-linked (Glycyl lysine isopeptide (Lys-Gly) (interchain with G-Cter in SUMO2)).

As to quaternary structure, composed predominantly of six polypeptides ranging from 110 to 150 kDa and a minor 300 kDa polypeptide. The majority of N- and C-terminal cleavage products remain tightly, albeit non-covalently, associated. Interacts with POU2F1, CREB3, ZBTB17, EGR2, E2F4, CREBZF, SP1, GABP2, Sin3 HDAC complex (SIN3A, HDAC1, HDAC2, SUDS3), SAP30, SIN3B and FHL2. Component of a MLL1 complex, composed of at least the core components KMT2A/MLL1, ASH2L, HCFC1, WDR5 and RBBP5, as well as the facultative components BACC1, CHD8, DPY30, E2F6, HCFC2, HSP70, INO80C, KANSL1, LAS1L, MAX, MCRS1, MEN1, MGA, KAT8, PELP1, PHF20, PRP31, RING2, RUVBL1, RUVBL2, SENP3, TAF1, TAF4, TAF6, TAF7, TAF9 and TEX10. Component of a THAP1/THAP3-HCFC1-OGT complex that is required for the regulation of the transcriptional activity of RRM1. Interacts directly with THAP3 (via its HBM). Interacts (via the Kelch-repeat domain) with THAP1 (via the HBM); the interaction recruits HCHC1 to the RRM1. Interacts with THAP7 and THAP11 (via the HMB). Interacts directly with OGT; the interaction, which requires the HCFC1 cleavage site domain, glycosylates and promotes the proteolytic processing of HCFC1, retains OGT in the nucleus and impacts the expression of herpes simplex virus immediate early viral genes. Component of the SET1 complex, at least composed of the catalytic subunit (SETD1A or SETD1B), WDR5, WDR82, RBBP5, ASH2L, CXXC1, HCFC1 and DPY30. Component of the NSL complex at least composed of MOF/KAT8, KANSL1, KANSL2, KANSL3, MCRS1, PHF20, OGT1/OGT, WDR5 and HCFC1. Component of a complex at least composed of ZNF335, HCFC1, CCAR2, EMSY, MKI67, RBBP5, ASH2L and WDR5; the complex is formed as a result of interactions between components of a nuclear receptor-mediated transcription complex and a histone methylation complex. Within the complex interacts with ZNF335. Interacts with TET2 and TET3. Interacts with HCFC1R1. Interacts with THAP11. Interacts (via Kelch domain) with KMT2E/MLL5 isoform 3 (via HBM motif). Interacts with E2F1. Accessory scaffold component of the polycomb repressive deubiquitinase (PR-DUB) complex, at least composed of BAP1, one of ASXL1, ASXL2 or (probably) ASXL3 and one of MBD5 or MBD6; the PR-DUB core associates with a number of accessory proteins, including FOXK1, FOXK2, KDM1B, HCFC1, YY1 and OGT. Interacts with YY1 (via Gly-rich region); the interaction is direct. Interacts with BAP1 (via HBM-like motif). In terms of assembly, (Microbial infection) Associates with the VP16-induced complex; binding to HCFC1 activates the viral transcriptional activator VP16 for association with POU2F1, to form a multiprotein-DNA complex responsible for activating transcription of the viral immediate early genes. Interacts with the viral transactivator protein VP16. Post-translationally, proteolytically cleaved at one or several PPCE--THET sites within the HCF repeats. Further cleavage of the primary N- and C-terminal chains results in a 'trimming' and accumulation of the smaller chains. Cleavage is promoted by O-glycosylation. In terms of processing, O-glycosylated. GlcNAcylation by OGT promotes proteolytic processing. Ubiquitinated. Lys-1807 and Lys-1808 are ubiquitinated both via 'Lys-48'- and 'Lys-63'-linked polyubiquitin chains. BAP1 mediated deubiquitination of 'Lys-48'-linked polyubiquitin chains; deubiquitination by BAP1 does not seem to stabilize the protein. In terms of tissue distribution, highly expressed in fetal tissues and the adult kidney. Present in all tissues tested.

It is found in the cytoplasm. It localises to the nucleus. Transcriptional coregulator. Serves as a scaffold protein, bridging interactions between transcription factors, including THAP11 and ZNF143, and transcriptional coregulators. Involved in control of the cell cycle. Also antagonizes transactivation by ZBTB17 and GABP2; represses ZBTB17 activation of the p15(INK4b) promoter and inhibits its ability to recruit p300. Coactivator for EGR2 and GABP2. Tethers the chromatin modifying Set1/Ash2 histone H3 'Lys-4' methyltransferase (H3K4me) and Sin3 histone deacetylase (HDAC) complexes (involved in the activation and repression of transcription, respectively) together. Component of a THAP1/THAP3-HCFC1-OGT complex that is required for the regulation of the transcriptional activity of RRM1. As part of the NSL complex it may be involved in acetylation of nucleosomal histone H4 on several lysine residues. Recruits KMT2E/MLL5 to E2F1 responsive promoters promoting transcriptional activation and thereby facilitates G1 to S phase transition. Modulates expression of homeobox protein PDX1, perhaps acting in concert with transcription factor E2F1, thereby regulating pancreatic beta-cell growth and glucose-stimulated insulin secretion. May negatively modulate transcriptional activity of FOXO3. Functionally, (Microbial infection) In case of human herpes simplex virus (HSV) infection, HCFC1 forms a multiprotein-DNA complex with the viral transactivator protein VP16 and POU2F1 thereby enabling the transcription of the viral immediate early genes. The protein is Host cell factor 1 of Homo sapiens (Human).